The chain runs to 734 residues: DNA replication licensing factor MCM5 (734 aa).

Position 2 is an N-acetylserine (Ser2). The MCM domain maps to 331 to 537 (IYELISKSIA…RDVMLAKHVI (207 aa)). Arg371 is a binding site for ADP. N6-acetyllysine occurs at positions 392 and 396. An Arginine finger motif is present at residues 512–515 (SRFD). Residue Ser605 is modified to Phosphoserine.

Belongs to the MCM family. Component of the MCM2-7 complex. The complex forms a toroidal hexameric ring with the proposed subunit order MCM2-MCM6-MCM4-MCM7-MCM3-MCM5. Component of the CMG helicase complex, a hexameric ring of related MCM2-7 subunits stabilized by CDC45 and the tetrameric GINS complex. Interacts with ANKRD17. Interacts with MCMBP. Interacts with TONSL; the interaction is direct.

It is found in the nucleus. The protein resides in the chromosome. The protein localises to the cytoplasm. It localises to the cytosol. The enzyme catalyses ATP + H2O = ADP + phosphate + H(+). In terms of biological role, acts as a component of the MCM2-7 complex (MCM complex) which is the replicative helicase essential for 'once per cell cycle' DNA replication initiation and elongation in eukaryotic cells. Core component of CDC45-MCM-GINS (CMG) helicase, the molecular machine that unwinds template DNA during replication, and around which the replisome is built. The active ATPase sites in the MCM2-7 ring are formed through the interaction surfaces of two neighboring subunits such that a critical structure of a conserved arginine finger motif is provided in trans relative to the ATP-binding site of the Walker A box of the adjacent subunit. The six ATPase active sites, however, are likely to contribute differentially to the complex helicase activity. This Bos taurus (Bovine) protein is DNA replication licensing factor MCM5.